The sequence spans 514 residues: ATP synthase subunit alpha (514 aa).

170–177 (GDRQIGKT) lines the ATP pocket.

This sequence belongs to the ATPase alpha/beta chains family. As to quaternary structure, F-type ATPases have 2 components, CF(1) - the catalytic core - and CF(0) - the membrane proton channel. CF(1) has five subunits: alpha(3), beta(3), gamma(1), delta(1), epsilon(1). CF(0) has three main subunits: a(1), b(2) and c(9-12). The alpha and beta chains form an alternating ring which encloses part of the gamma chain. CF(1) is attached to CF(0) by a central stalk formed by the gamma and epsilon chains, while a peripheral stalk is formed by the delta and b chains.

Its subcellular location is the cell inner membrane. The enzyme catalyses ATP + H2O + 4 H(+)(in) = ADP + phosphate + 5 H(+)(out). In terms of biological role, produces ATP from ADP in the presence of a proton gradient across the membrane. The alpha chain is a regulatory subunit. The chain is ATP synthase subunit alpha from Pseudomonas putida (strain ATCC 47054 / DSM 6125 / CFBP 8728 / NCIMB 11950 / KT2440).